The following is a 315-amino-acid chain: Methionyl-tRNA formyltransferase (315 aa).

113 to 116 (SLLP) provides a ligand contact to (6S)-5,6,7,8-tetrahydrofolate.

Belongs to the Fmt family.

The enzyme catalyses L-methionyl-tRNA(fMet) + (6R)-10-formyltetrahydrofolate = N-formyl-L-methionyl-tRNA(fMet) + (6S)-5,6,7,8-tetrahydrofolate + H(+). In terms of biological role, attaches a formyl group to the free amino group of methionyl-tRNA(fMet). The formyl group appears to play a dual role in the initiator identity of N-formylmethionyl-tRNA by promoting its recognition by IF2 and preventing the misappropriation of this tRNA by the elongation apparatus. This Klebsiella pneumoniae subsp. pneumoniae (strain ATCC 700721 / MGH 78578) protein is Methionyl-tRNA formyltransferase.